A 612-amino-acid chain; its full sequence is Protein cereblon (612 aa).

A compositionally biased stretch (acidic residues) spans Met1–Asp11. Disordered regions lie at residues Met1 to Ala30, Met58 to Pro133, and Gln181 to Val211. Residues Ala69 to Ser81 show a composition bias toward low complexity. Basic and acidic residues predominate over residues Gln181–Glu190. One can recognise a Lon N-terminal domain in the interval His250–Ser478. The CULT domain occupies Glu477–Lys586. The Zn(2+) site is built by Cys482, Cys485, Cys551, and Cys554.

This sequence belongs to the CRBN family. In terms of assembly, likely a component of a DCX (DDB1-CUL4-X-box) protein ligase complex. May interact with pic/DDB1. Ubiquitinated.

It localises to the nucleus. Its pathway is protein modification; protein ubiquitination. Its function is as follows. Substrate recognition component of a DCX (DDB1-CUL4-X-box) E3 protein ligase complex that mediates the ubiquitination and subsequent proteasomal degradation of target proteins. Has an essential role in mediating growth by negatively regulating insulin signaling. It also has a role in maintaining presynaptic function in the neuromuscular junction synapses of third-instar larvae. This Drosophila willistoni (Fruit fly) protein is Protein cereblon.